The chain runs to 272 residues: MSAQVATRRLTQADLAKLYQAGEKIAQFTCYDASFARLLDGAGVDSILIGDSLGNVIQGHDTTLPVTVADIAYHTAAVKRGCDRAFIVADMPFGSYQESPEQAFRNAATLMAAGAQMVKLEGGADMAPTVRFMVSRGIPVCGHIGLTPQSVHVLGGYKVQGKGEAAAQRLKDDAMALKAAGATMLLLEAIPATLAAEVTAMTGVITIGIGAGKDCSGQVMVLHDAFDIPPGKKAKFVKNFMEGASSIHDAACRAIAAVKDGSYPGPEHTYSA.

D51 and D90 together coordinate Mg(2+). 3-methyl-2-oxobutanoate-binding positions include 51–52 (DS), D90, and K119. Mg(2+) is bound at residue E121. The active-site Proton acceptor is the E188.

This sequence belongs to the PanB family. Homodecamer; pentamer of dimers. It depends on Mg(2+) as a cofactor.

The protein resides in the cytoplasm. The catalysed reaction is 3-methyl-2-oxobutanoate + (6R)-5,10-methylene-5,6,7,8-tetrahydrofolate + H2O = 2-dehydropantoate + (6S)-5,6,7,8-tetrahydrofolate. The protein operates within cofactor biosynthesis; (R)-pantothenate biosynthesis; (R)-pantoate from 3-methyl-2-oxobutanoate: step 1/2. Its function is as follows. Catalyzes the reversible reaction in which hydroxymethyl group from 5,10-methylenetetrahydrofolate is transferred onto alpha-ketoisovalerate to form ketopantoate. The polypeptide is 3-methyl-2-oxobutanoate hydroxymethyltransferase (Dechloromonas aromatica (strain RCB)).